A 169-amino-acid chain; its full sequence is Biogenesis of lysosome-related organelles complex 1 subunit 4 (169 aa).

Belongs to the BLOC1S4 family. Component of the biogenesis of lysosome-related organelles complex-1 (BLOC-1) composed of Blos1, Blos2, Blos3, Blos4, Dysb, Muted, Pldn and Snapin. Interacts with Pldn.

Its function is as follows. Component of the biogenesis of lysosome-related organelles complex-1 (BLOC-1) involved in pigment granule biogenesis. This chain is Biogenesis of lysosome-related organelles complex 1 subunit 4, found in Drosophila melanogaster (Fruit fly).